A 199-amino-acid polypeptide reads, in one-letter code: Thymidine kinase (199 aa).

ATP-binding positions include 15 to 22 and 88 to 91; these read GSMFSGKS and DEVQ. The Proton acceptor role is filled by Glu89. Residues Cys145, Cys148, Cys183, and His186 each coordinate Zn(2+).

It belongs to the thymidine kinase family. Homotetramer.

It is found in the cytoplasm. It catalyses the reaction thymidine + ATP = dTMP + ADP + H(+). The sequence is that of Thymidine kinase from Staphylococcus aureus (strain Mu50 / ATCC 700699).